We begin with the raw amino-acid sequence, 286 residues long: Elongation factor Ts (286 aa).

Positions 79-82 (TDFV) are involved in Mg(2+) ion dislocation from EF-Tu.

It belongs to the EF-Ts family.

It is found in the cytoplasm. Associates with the EF-Tu.GDP complex and induces the exchange of GDP to GTP. It remains bound to the aminoacyl-tRNA.EF-Tu.GTP complex up to the GTP hydrolysis stage on the ribosome. This is Elongation factor Ts from Wolbachia sp. subsp. Drosophila simulans (strain wRi).